Consider the following 389-residue polypeptide: NADH-quinone oxidoreductase subunit D (389 aa).

Belongs to the complex I 49 kDa subunit family. NDH-1 is composed of 14 different subunits. Subunits NuoB, C, D, E, F, and G constitute the peripheral sector of the complex.

It localises to the cell inner membrane. It carries out the reaction a quinone + NADH + 5 H(+)(in) = a quinol + NAD(+) + 4 H(+)(out). Functionally, NDH-1 shuttles electrons from NADH, via FMN and iron-sulfur (Fe-S) centers, to quinones in the respiratory chain. The immediate electron acceptor for the enzyme in this species is believed to be ubiquinone. Couples the redox reaction to proton translocation (for every two electrons transferred, four hydrogen ions are translocated across the cytoplasmic membrane), and thus conserves the redox energy in a proton gradient. This is NADH-quinone oxidoreductase subunit D from Citrifermentans bemidjiense (strain ATCC BAA-1014 / DSM 16622 / JCM 12645 / Bem) (Geobacter bemidjiensis).